The following is a 447-amino-acid chain: UPF0210 protein LCK_00974 (447 aa).

The protein belongs to the UPF0210 family. As to quaternary structure, homodimer.

This chain is UPF0210 protein LCK_00974, found in Leuconostoc citreum (strain KM20).